The chain runs to 40 residues: Photosystem II reaction center protein J (40 aa).

A helical transmembrane segment spans residues 8–28 (IPLWLVGTVTGIPVIGLIGVF).

Belongs to the PsbJ family. As to quaternary structure, PSII is composed of 1 copy each of membrane proteins PsbA, PsbB, PsbC, PsbD, PsbE, PsbF, PsbH, PsbI, PsbJ, PsbK, PsbL, PsbM, PsbT, PsbX, PsbY, PsbZ, Psb30/Ycf12, at least 3 peripheral proteins of the oxygen-evolving complex and a large number of cofactors. It forms dimeric complexes.

It localises to the plastid. The protein localises to the chloroplast thylakoid membrane. In terms of biological role, one of the components of the core complex of photosystem II (PSII). PSII is a light-driven water:plastoquinone oxidoreductase that uses light energy to abstract electrons from H(2)O, generating O(2) and a proton gradient subsequently used for ATP formation. It consists of a core antenna complex that captures photons, and an electron transfer chain that converts photonic excitation into a charge separation. This is Photosystem II reaction center protein J from Musa acuminata (Banana).